Here is a 219-residue protein sequence, read N- to C-terminus: NAD(P)H-quinone oxidoreductase subunit I (219 aa).

2 4Fe-4S ferredoxin-type domains span residues 55–84 and 95–124; these read GRIH…VDWV and RNYS…MTEE. [4Fe-4S] cluster-binding residues include Cys-64, Cys-67, Cys-70, Cys-74, Cys-104, Cys-107, Cys-110, and Cys-114. Residues 192-219 form a disordered region; that stretch reads LKAAGSMKAAEDERESSSSASNMEESAG. The span at 208 to 219 shows a compositional bias: low complexity; sequence SSSASNMEESAG.

This sequence belongs to the complex I 23 kDa subunit family. NDH-1 is composed of at least 11 different subunits. It depends on [4Fe-4S] cluster as a cofactor.

The protein localises to the cellular thylakoid membrane. The enzyme catalyses a plastoquinone + NADH + (n+1) H(+)(in) = a plastoquinol + NAD(+) + n H(+)(out). The catalysed reaction is a plastoquinone + NADPH + (n+1) H(+)(in) = a plastoquinol + NADP(+) + n H(+)(out). In terms of biological role, NDH-1 shuttles electrons from an unknown electron donor, via FMN and iron-sulfur (Fe-S) centers, to quinones in the respiratory and/or the photosynthetic chain. The immediate electron acceptor for the enzyme in this species is believed to be plastoquinone. Couples the redox reaction to proton translocation, and thus conserves the redox energy in a proton gradient. This chain is NAD(P)H-quinone oxidoreductase subunit I, found in Synechococcus sp. (strain CC9311).